Reading from the N-terminus, the 227-residue chain is MADS-box transcription factor 25 (227 aa).

Positions 1 to 61 constitute an MADS-box domain; it reads MGRGKIAIKR…GRLYDFSSSS (61 aa). The K-box domain occupies 86 to 176; the sequence is AKFWQREVTT…RKKFNIAHQR (91 aa). The disordered stretch occupies residues 183 to 227; the sequence is KLNSGESTSSEQVTRSSKDPGESSTPRDSRVCIDLELSQKEVEDE. Positions 186–197 are enriched in polar residues; the sequence is SGESTSSEQVTR. Basic and acidic residues predominate over residues 198–227; sequence SSKDPGESSTPRDSRVCIDLELSQKEVEDE.

As to expression, expressed in seedling roots.

The protein localises to the nucleus. In terms of biological role, probable transcription factor. This Oryza sativa subsp. japonica (Rice) protein is MADS-box transcription factor 25 (MADS25).